The sequence spans 881 residues: Sodium/potassium/calcium exchanger Nckx30C (881 aa).

The Extracellular portion of the chain corresponds to 1–194 (MLQPTTCSKQ…SRCRSRRCLR (194 aa)). Asparagine 69 carries N-linked (GlcNAc...) asparagine glycosylation. Disordered stretches follow at residues 79 to 111 (DMLS…APSD), 149 to 181 (AKTR…LLHP), 215 to 255 (AAKP…TSGE), and 272 to 315 (GLEE…TTKT). Residues 85-95 (RSRSSSTTIDF) are compositionally biased toward polar residues. Over residues 149–175 (AKTRSRTAAQLPATSAASATSSRGASA) the composition is skewed to low complexity. The helical transmembrane segment at 195–215 (LPIYSILLLCLTTQGLGLGDA) threads the bilayer. At 216–330 (AKPRPAKQHF…DLFTKEQLEN (115 aa)) the chain is on the cytoplasmic side. Residues 228–240 (SNSNSPNQNQNHN) show a composition bias toward low complexity. Positions 296 to 315 (AGNQRGINDTHNDNSTTTKT) are enriched in polar residues. Residues 331 to 351 (GAVILHIIGVIYMFVALAIVC) form a helical membrane-spanning segment. Over 352-375 (DEFFVPSLDVIIEKLGITDDVAGA) the chain is Extracellular. An Alpha-1 repeat occupies 372–412 (VAGATFMAAGGSAPELFTSVIGVFVSFDDVGIGTIVGSAVF). A helical transmembrane segment spans residues 376-396 (TFMAAGGSAPELFTSVIGVFV). Residues 397-402 (SFDDVG) lie on the Cytoplasmic side of the membrane. A helical membrane pass occupies residues 403–423 (IGTIVGSAVFNILFVIGMCAL). Residues 424-433 (FSKTVLSLTW) lie on the Extracellular side of the membrane. Residues 434–454 (WPLFRDCSFYSISLLVLIYFF) traverse the membrane as a helical segment. Over 455–458 (RDNR) the chain is Cytoplasmic. Residues 459 to 479 (IFWWEALILFTIYIGYVAFMK) form a helical membrane-spanning segment. Over 480 to 720 (WNVQVETCVK…PDTRTPRGKR (241 aa)) the chain is Extracellular. A disordered region spans residues 508–565 (PAGNAANSSETSMATQPGGSVTSRAASETRSGPPGSSNAGATGNSSGGGGTSGSTQTG). Residues 512–537 (AANSSETSMATQPGGSVTSRAASETR) are compositionally biased toward polar residues. Residues asparagine 514 and asparagine 551 are each glycosylated (N-linked (GlcNAc...) asparagine). Over residues 542-551 (GSSNAGATGN) the composition is skewed to low complexity. A helical membrane pass occupies residues 721-741 (FFPVTFIGSIVWIAAFSYLMV). At 742–756 (WWANVAGDTARIPPE) the chain is on the cytoplasmic side. Residues 757–777 (VMGLTFLAAGTSIPDLITSVI) form a helical membrane-spanning segment. Residues 764 to 795 (AAGTSIPDLITSVIVARKGFGDMAVSSSVGSN) form an Alpha-2 repeat. The Extracellular segment spans residues 778 to 795 (VARKGFGDMAVSSSVGSN). A helical transmembrane segment spans residues 796-816 (IFDVTVGLPIPWLLYGIIYGA). The Cytoplasmic segment spans residues 817-822 (PVEVNS). The helical transmembrane segment at 823 to 843 (VGMVCSITILFMMLVFVVMSI) threads the bilayer. Over 844–852 (ACFRWRMNK) the chain is Extracellular. The chain crosses the membrane as a helical span at residues 853–873 (GLGFTMFLLYFAFVAVSLMFE). The Cytoplasmic portion of the chain corresponds to 874–881 (YDVITCPF).

This sequence belongs to the Ca(2+):cation antiporter (CaCA) (TC 2.A.19) family. SLC24A subfamily. Expressed in the adult nervous system. Expressed in the photoreceptor cells as well as in the lamina, medulla, and optic lobes of the brain.

The protein localises to the membrane. Its function is as follows. May function in the removal and maintenance of calcium homeostasis during signaling in the adult and in signaling events during embryogenesis and patterning of imaginal disks. Transports one Ca(2+) and 1 K(+) in exchange for 4 Na(+). The protein is Sodium/potassium/calcium exchanger Nckx30C (Nckx30C) of Drosophila melanogaster (Fruit fly).